Reading from the N-terminus, the 375-residue chain is Queuine tRNA-ribosyltransferase (375 aa).

Asp-90 serves as the catalytic Proton acceptor. Substrate-binding positions include Asp-90–Phe-94, Asp-144, Gln-193, and Gly-220. The tract at residues Gly-251–Asp-257 is RNA binding. Catalysis depends on Asp-270, which acts as the Nucleophile. Positions Thr-275–Arg-279 are RNA binding; important for wobble base 34 recognition. Residues Cys-308, Cys-310, Cys-313, and His-339 each contribute to the Zn(2+) site.

It belongs to the queuine tRNA-ribosyltransferase family. In terms of assembly, homodimer. Within each dimer, one monomer is responsible for RNA recognition and catalysis, while the other monomer binds to the replacement base PreQ1. It depends on Zn(2+) as a cofactor.

The catalysed reaction is 7-aminomethyl-7-carbaguanine + guanosine(34) in tRNA = 7-aminomethyl-7-carbaguanosine(34) in tRNA + guanine. It functions in the pathway tRNA modification; tRNA-queuosine biosynthesis. Functionally, catalyzes the base-exchange of a guanine (G) residue with the queuine precursor 7-aminomethyl-7-deazaguanine (PreQ1) at position 34 (anticodon wobble position) in tRNAs with GU(N) anticodons (tRNA-Asp, -Asn, -His and -Tyr). Catalysis occurs through a double-displacement mechanism. The nucleophile active site attacks the C1' of nucleotide 34 to detach the guanine base from the RNA, forming a covalent enzyme-RNA intermediate. The proton acceptor active site deprotonates the incoming PreQ1, allowing a nucleophilic attack on the C1' of the ribose to form the product. After dissociation, two additional enzymatic reactions on the tRNA convert PreQ1 to queuine (Q), resulting in the hypermodified nucleoside queuosine (7-(((4,5-cis-dihydroxy-2-cyclopenten-1-yl)amino)methyl)-7-deazaguanosine). The sequence is that of Queuine tRNA-ribosyltransferase from Janthinobacterium sp. (strain Marseille) (Minibacterium massiliensis).